We begin with the raw amino-acid sequence, 540 residues long: Zinc finger protein 768 (540 aa).

2 disordered regions span residues 1–166 (MERE…FEAQ) and 239–258 (TGALRGPGRRGGRARGGQGP). Phosphoserine is present on residues serine 17, serine 18, and serine 23. Tyrosine 27 is modified (phosphotyrosine). At serine 33 the chain carries Phosphoserine. The segment covering 34–53 (ENEEEEISQQEGSGDYEVEE) has biased composition (acidic residues). 11 positions are modified to phosphoserine: serine 62, serine 69, serine 76, serine 83, serine 90, serine 97, serine 104, serine 107, serine 111, serine 118, and serine 125. Residues 62–77 (SPGFEPQSPEFEPQSP) show a composition bias toward low complexity. Residues 107–119 (SDSQSPEFESQSP) are compositionally biased toward polar residues. The residue at position 128 (tyrosine 128) is a Phosphotyrosine. A Phosphoserine modification is found at serine 132. A Phosphotyrosine modification is found at tyrosine 135. Serine 139 is modified (phosphoserine). Tyrosine 142 carries the post-translational modification Phosphotyrosine. Serine 144 and serine 147 each carry phosphoserine. The span at 149–166 (YESQNTELKTQSPEFEAQ) shows a compositional bias: polar residues. Threonine 158 carries the phosphothreonine modification. Position 160 is a phosphoserine (serine 160). Residues 261-283 (NICGICGKSFGRGSTLIQHQRIH) form a C2H2-type 1 zinc finger. Position 284 is a phosphothreonine (threonine 284). Tyrosine 289 is subject to Phosphotyrosine. C2H2-type zinc fingers lie at residues 289–311 (YKCEVCSKAFSQSSDLIKHQRTH), 317–339 (YKCPRCGKAFADSSYLLRHQRTH), 345–367 (YKCPHCGKAFGDSSYLLRHQRTH), and 373–395 (YSCTECGKCYSQNSSLRSHQRVH). A phosphoserine mark is found at serine 295 and serine 299. Threonine 396 is subject to Phosphothreonine. 5 consecutive C2H2-type zinc fingers follow at residues 401–423 (FSCGICGKSFSQRSALIPHARSH), 429–451 (FKCPECGKRFGQSSVLAIHARTH), 457–479 (YSCPDCGKTFNRSSTLIQHQRSH), 485–507 (YRCAVCGKGFCRSSTLLQHHRVH), and 513–535 (YKCDDCGKAFSQSSDLIRHQRTH). Phosphoserine is present on serine 442.

The protein belongs to the krueppel C2H2-type zinc-finger protein family. Interacts (via zinc-finger domains) with TP53 (via N-terminus); interaction might be facilitated by TP53 oligomerization state. Interacts with ELP3. Post-translationally, may be phosphorylated at residue 'Ser-5' of the tandem heptapeptide repeats in the N-terminus. Phosphorylation might be increased upon RAS pathway activation and negatively regulate protein stability.

The protein localises to the nucleus. The protein resides in the chromosome. In terms of biological role, binds to mammalian-wide interspersed repeat (MIRs) sequences in euchromatin and promoter regions of genes at the consensus sequence 5'-GCTGTGTG-[N20]-CCTCTCTG-3', consisting of two anchor regions connected by a linker region; the linker region probably does not contribute to the binding specificity. Required for cell homeostasis. May be involved in transcriptional regulation. This Homo sapiens (Human) protein is Zinc finger protein 768 (ZNF768).